Consider the following 135-residue polypeptide: Probable 5-hydroxyisourate hydrolase R09H10.3 (135 aa).

The signal sequence occupies residues 1–20; sequence MNKFSLFFALTATLMTITES. Residues histidine 30, arginine 68, and tyrosine 132 each contribute to the substrate site.

It belongs to the transthyretin family. 5-hydroxyisourate hydrolase subfamily. In terms of assembly, homotetramer.

The enzyme catalyses 5-hydroxyisourate + H2O = 5-hydroxy-2-oxo-4-ureido-2,5-dihydro-1H-imidazole-5-carboxylate + H(+). Its function is as follows. Catalyzes the hydrolysis of 5-hydroxyisourate (HIU) to 2-oxo-4-hydroxy-4-carboxy-5-ureidoimidazoline (OHCU). This chain is Probable 5-hydroxyisourate hydrolase R09H10.3, found in Caenorhabditis elegans.